We begin with the raw amino-acid sequence, 913 residues long: Transient receptor potential cation channel protein painless (913 aa).

Residues 1–490 (MDFNNCGFID…SSFLFLKWHR (490 aa)) lie on the Cytoplasmic side of the membrane. 3 ANK repeats span residues 154–189 (GEFTPLHHVLRKSKVKAGKKELIQLFLDHPELDIDS), 260–289 (EYFGLLQESIKRGRQRAFDVILSTGMDINS), and 368–397 (GRLVPLFFAVKYRNTSAMQKLLKNGAYIGS). The chain crosses the membrane as a helical span at residues 491–511 (LSVIFYLNFLIYSLFTASIIT). Over 512–523 (YTLLKFHESDQR) the chain is Extracellular. Residues 524-544 (ALTAFFGLLSWLGISYLILRE) form a helical membrane-spanning segment. The Cytoplasmic segment spans residues 545–555 (CIQWIMSPVRY). Residues 556–576 (FWSITNIMEVALITLSIFTCM) traverse the membrane as a helical segment. At 577–586 (ESSFDKETQR) the chain is on the extracellular side. The helical transmembrane segment at 587–607 (VLAVFTILLVSMEFCLLVGSL) threads the bilayer. Topologically, residues 608 to 628 (PVLSISTHMLMLREVSNSFLK) are cytoplasmic. Residues 629–649 (SFTLYSIFVLTFSLCFYILFG) traverse the membrane as a helical segment. At 650-708 (KSVEEDQSKSATPCPPLGKKEGKDEEQGFNTFTKPIEAVIKTIVMLTGEFDAGSIQFTS) the chain is on the extracellular side. The interval 656–675 (QSKSATPCPPLGKKEGKDEE) is disordered. Residues 709 to 729 (IYTYLIFLLFVIFMTIVLFNL) form a helical membrane-spanning segment. Residues 730 to 913 (LNGLAVSDTQ…QLIQLVQDRK (184 aa)) are Cytoplasmic-facing.

Belongs to the transient receptor (TC 1.A.4) family. Present in multidendritic neurons, chordotonal neurons, a subset of cells in the central nervous system and a subset of sensory neurons in the antennal-maxillary complex. Not detected in gonads and dorsal vessels (at protein level). Expressed in peripheral neurons that extend multiple branched dendrites beneath the larval epidermis, similar to vertebrate pain receptors.

The protein localises to the membrane. Functionally, receptor-activated non-selective cation channel involved in detection of pain sensation due to high temperature. Involved in heat nociception by being activated by noxious temperature of 38 degrees Celsius. This is Transient receptor potential cation channel protein painless (pain) from Drosophila melanogaster (Fruit fly).